The primary structure comprises 739 residues: UPF0313 protein YgiQ (739 aa).

Residues 372–650 enclose the Radical SAM core domain; the sequence is AYEMIRFSVN…KALLRYHDPA (279 aa). [4Fe-4S] cluster-binding residues include Cys386, Cys390, and Cys393. The disordered stretch occupies residues 686 to 739; it reads EARRQNRNTRPALTKHTPMATQCQTPATAKKASSTQSRPVNAGAKKRPKAAVGR. Residues 704-724 are compositionally biased toward polar residues; it reads MATQCQTPATAKKASSTQSRP. The span at 729–739 shows a compositional bias: basic residues; the sequence is AKKRPKAAVGR.

This sequence belongs to the UPF0313 family. [4Fe-4S] cluster serves as cofactor.

The polypeptide is UPF0313 protein YgiQ (Escherichia coli O157:H7).